Reading from the N-terminus, the 450-residue chain is Zinc finger protein 446 (450 aa).

Residues 26–108 (RLRFRGFCYQ…ALVEGLQHDP (83 aa)) form the SCAN box domain. Lys-130 is covalently cross-linked (Glycyl lysine isopeptide (Lys-Gly) (interchain with G-Cter in SUMO2)). Disordered regions lie at residues 130–155 (KTEE…QDTR) and 168–205 (EEPN…SFHP). At Ser-137 the chain carries Phosphoserine. Residues 208–254 (IQEEWGLLDRSQKELYWDAMLEKYGTVVSLGLPPHQPEAQAQSELGM) form the KRAB domain. Ser-218 is modified (phosphoserine). 2 disordered regions span residues 263–331 (RSLR…PRKP) and 354–389 (HTSG…RRSL). Over residues 275-286 (PGCPEAQPPQGP) the composition is skewed to pro residues. Residues 287–306 (GPAAWEGLSGAATPAPTVRP) are compositionally biased toward low complexity. Thr-308 is subject to Phosphothreonine. Residue Lys-330 forms a Glycyl lysine isopeptide (Lys-Gly) (interchain with G-Cter in SUMO2) linkage. 3 C2H2-type zinc fingers span residues 332-359 (YTCE…SGPG), 395-422 (YPCE…GQRR), and 423-450 (HFCS…PEVP).

It belongs to the krueppel C2H2-type zinc-finger protein family.

Its subcellular location is the nucleus. Its function is as follows. May be involved in transcriptional regulation. This is Zinc finger protein 446 (ZNF446) from Homo sapiens (Human).